Here is a 271-residue protein sequence, read N- to C-terminus: Ribosomal RNA small subunit methyltransferase A (271 aa).

The S-adenosyl-L-methionine site is built by His-11, Leu-13, Gly-38, Glu-58, Asp-86, and Asn-101.

The protein belongs to the class I-like SAM-binding methyltransferase superfamily. rRNA adenine N(6)-methyltransferase family. RsmA subfamily.

The protein resides in the cytoplasm. The catalysed reaction is adenosine(1518)/adenosine(1519) in 16S rRNA + 4 S-adenosyl-L-methionine = N(6)-dimethyladenosine(1518)/N(6)-dimethyladenosine(1519) in 16S rRNA + 4 S-adenosyl-L-homocysteine + 4 H(+). In terms of biological role, specifically dimethylates two adjacent adenosines (A1518 and A1519) in the loop of a conserved hairpin near the 3'-end of 16S rRNA in the 30S particle. May play a critical role in biogenesis of 30S subunits. This Helicobacter pylori (strain HPAG1) protein is Ribosomal RNA small subunit methyltransferase A.